The sequence spans 217 residues: MSGGGGASAGDVSRETRERIEALVSRETLSRLEAFAALILRWTARINLVSRKDAAPAEIWNRHILDSLQMLPLVPQGAFRAADLGSGGGLPGLVLAIARPEIGFTLIESDRRKAAFLQTAIAELKLNATVLPVRIEQARLEPSPLVTARALAALPVLFGYAAPLLAPGGVCLFLKGRGADAELTAAAEGWQMRAERFPSQTDAGAAILRISELRRAA.

Residues Gly-85, Leu-90, 135–136 (IE), and Arg-149 contribute to the S-adenosyl-L-methionine site.

Belongs to the methyltransferase superfamily. RNA methyltransferase RsmG family.

The protein localises to the cytoplasm. The enzyme catalyses guanosine(527) in 16S rRNA + S-adenosyl-L-methionine = N(7)-methylguanosine(527) in 16S rRNA + S-adenosyl-L-homocysteine. Its function is as follows. Specifically methylates the N7 position of guanine in position 527 of 16S rRNA. In Acidiphilium cryptum (strain JF-5), this protein is Ribosomal RNA small subunit methyltransferase G.